The primary structure comprises 113 residues: Large ribosomal subunit protein P1 (113 aa).

The interval 84–113 (APAAAAKKETKKEEVKKEESDDDMGMGLFD) is disordered. Residues 89–102 (AKKETKKEEVKKEE) show a composition bias toward basic and acidic residues.

Belongs to the eukaryotic ribosomal protein P1/P2 family. P1 and P2 exist as dimers at the large ribosomal subunit.

In terms of biological role, plays an important role in the elongation step of protein synthesis. This is Large ribosomal subunit protein P1 (rplp1) from Dictyostelium discoideum (Social amoeba).